Reading from the N-terminus, the 313-residue chain is DDRGK domain-containing protein 1 (313 aa).

The helical transmembrane segment at 1-28 threads the bilayer; the sequence is MVSPVVYLVVAALLVGLILFLTRGRGRA. Residues 1–113 form a mediates interaction with CDK5RAP3 region; the sequence is MVSPVVYLVV…IEKPVETHLS (113 aa). Residues 29–313 lie on the Cytoplasmic side of the membrane; the sequence is AAAAQEPLHN…GRETPAQAPA (285 aa). Residues 40 to 88 are disordered; that stretch reads EVPAAAGRVARPQPLEPEEQRAAGRPRRRRDLGSRLQAQRRAQRVAWAD. Phosphoserine is present on residues Ser73 and Ser113. Over residues 73 to 87 the composition is skewed to low complexity; the sequence is SRLQAQRRAQRVAWA. The interval 117 to 215 is mediates interaction with TRIP4; it reads GAKKLRKLEE…MTEEQSHSFL (99 aa). Positions 130–185 are disordered; that stretch reads RKAQREAEEAEREERKRLESQREAEWKKEEERLRLEEEQKEEEERKAQEEQAQREH. A UFM1-interacting motif (UFIM) motif is present at residues 194 to 208; the sequence is TFVVVEEGVGETMTE. Residues 215–313 form a mediates interaction with UFL1 region; sequence LAEFINYIKQ…GRETPAQAPA (99 aa). In terms of domain architecture, PCI spans 228–272; the sequence is VLLEDLASQVGLRTQDTINRIQDLLAEGTLTGVIDDRGKFIYITP. Lys266 participates in a covalent cross-link: Glycyl lysine isopeptide (Lys-Gly) (interchain with G-Cter in UFM1).

It belongs to the DDRGK1 family. As to quaternary structure, component of the UFM1 ribosome E3 ligase (UREL) complex, composed of UFL1, DDRGK1 and CDK5RAP3. Interacts with (unphosphorylated) ERN1/IRE1-alpha; interaction is dependent on UFM1 and takes place in response to endoplasmic reticulum stress, regulating ERN1/IRE1-alpha stability. Interacts with NFKBIA. Interacts with SOX9. Post-translationally, ubiquitinated. Ubiquitination probably triggers proteasomal degradation and is negatively regulated by UFL1, the enzyme involved in the ufmylation of DDRGK1. Ufmylated; conjugated to ubiquitin-like protein UFM1, probably at Lys-266 by UFL1. The relevance of ufmylation is however unclear: as DDRGK1 acts as a substrate adapter for ufmylation, it is uncertain whether ufmylation is a collateral effect of the ufmylation process or whether it is required to regulate its activity.

It is found in the endoplasmic reticulum membrane. In terms of biological role, component of the UFM1 ribosome E3 ligase (UREL) complex, a multiprotein complex that catalyzes ufmylation of endoplasmic reticulum-docked proteins. The UREL complex plays a key role in ribosome recycling by mediating mono-ufmylation of the RPL26/uL24 subunit of the 60S ribosome following ribosome dissociation: ufmylation weakens the junction between post-termination 60S subunits and SEC61 translocons, promoting release and recycling of the large ribosomal subunit from the endoplasmic reticulum membrane. Ufmylation of RPL26/uL24 and subsequent 60S ribosome recycling either take place after normal termination of translation or after ribosome stalling during cotranslational translocation at the endoplasmic reticulum. Within the UREL complex, DDRGK1 tethers the complex to the endoplasmic reticulum membrane to restrict its activity to endoplasmic reticulum-docked ribosomes and acts as an ufmylation 'reader': following RPL26/uL24 ufmylation, DDRGK1 specifically binds to ufmylated RPL26/uL24 via its UFIM motif, resulting in stable association between the 60S ribosome and the UREL complex, followed by dissociation of the 60S ribosome subunit from the endoplasmic reticulum membrane. The UREL complex is also involved in reticulophagy in response to endoplasmic reticulum stress by promoting ufmylation of proteins such as CYB5R3 and RPN1, thereby promoting lysosomal degradation of ufmylated proteins. Ufmylation-dependent reticulophagy inhibits the unfolded protein response (UPR) by regulating ERN1/IRE1-alpha stability. Acts as a regulator of immunity by promoting differentiation of B-cells into plasma cells: acts by promoting expansion of the endoplasmic reticulum and regulating the unfolded protein response (UPR). May also be required for TRIP4 ufmylation. May play a role in NF-kappa-B-mediated transcription through regulation of the phosphorylation and the degradation of NFKBIA, the inhibitor of NF-kappa-B. Plays a role in cartilage development through SOX9, inhibiting the ubiquitin-mediated proteasomal degradation of this transcriptional regulator. Required for stabilization and ufmylation of ATG9A. The chain is DDRGK domain-containing protein 1 from Bos taurus (Bovine).